The sequence spans 358 residues: 3-dehydroquinate synthase (358 aa).

NAD(+) contacts are provided by residues 69–74, 103–107, 127–128, lysine 140, lysine 149, and 167–170; these read DGEAHK, GVIGD, TT, and CLRT. Residues glutamate 182, histidine 245, and histidine 262 each contribute to the Zn(2+) site.

The protein belongs to the sugar phosphate cyclases superfamily. Dehydroquinate synthase family. Requires Co(2+) as cofactor. It depends on Zn(2+) as a cofactor. The cofactor is NAD(+).

The protein resides in the cytoplasm. It catalyses the reaction 7-phospho-2-dehydro-3-deoxy-D-arabino-heptonate = 3-dehydroquinate + phosphate. It participates in metabolic intermediate biosynthesis; chorismate biosynthesis; chorismate from D-erythrose 4-phosphate and phosphoenolpyruvate: step 2/7. Catalyzes the conversion of 3-deoxy-D-arabino-heptulosonate 7-phosphate (DAHP) to dehydroquinate (DHQ). The protein is 3-dehydroquinate synthase of Tolumonas auensis (strain DSM 9187 / NBRC 110442 / TA 4).